We begin with the raw amino-acid sequence, 1131 residues long: Phytochrome (1131 aa).

The interval 1 to 30 is disordered; the sequence is MASNSRHTQSQSTGSNNRRSSTNTNTTTNK. Positions 9–29 are enriched in low complexity; sequence QSQSTGSNNRRSSTNTNTTTN. Residues 227 to 406 form the GAF domain; it reads DVGLLCDTVV…ALGLQLNMEL (180 aa). Position 332 (cysteine 332) interacts with phytochromobilin. PAS domains lie at 621-692 and 755-826; these read VASE…LRGE and DYRS…TIVL. The region spanning 903–1123 is the Histidine kinase domain; it reads YIRQEIKNPL…LVNVEFPMAQ (221 aa).

This sequence belongs to the phytochrome family. Homodimer. In terms of processing, contains one covalently linked phytochromobilin chromophore.

Regulatory photoreceptor which exists in two forms that are reversibly interconvertible by light: the Pr form that absorbs maximally in the red region of the spectrum and the Pfr form that absorbs maximally in the far-red region. Photoconversion of Pr to Pfr induces an array of morphogenic responses, whereas reconversion of Pfr to Pr cancels the induction of those responses. Pfr controls the expression of a number of nuclear genes including those encoding the small subunit of ribulose-bisphosphate carboxylase, chlorophyll A/B binding protein, protochlorophyllide reductase, rRNA, etc. It also controls the expression of its own gene(s) in a negative feedback fashion. The protein is Phytochrome of Pinus sylvestris (Scotch pine).